Reading from the N-terminus, the 215-residue chain is Protein Thf1 (215 aa).

The stretch at 182–213 (ERMDQAVELVEETIAAEKRKKERRLEEQAQRT) forms a coiled coil.

This sequence belongs to the THF1 family.

May be involved in photosynthetic membrane biogenesis. The protein is Protein Thf1 of Synechococcus sp. (strain CC9605).